The chain runs to 625 residues: TRAF3-interacting protein 1 (625 aa).

The tract at residues 1–322 (MNAAVVRRTQ…RKLSDGSFKD (322 aa)) is abolishes microtubules binding when missing. The disordered stretch occupies residues 130-439 (AGDKGDSRGR…DSQNSDNEDD (310 aa)). Residues 141–152 (QRTSKAQEPNNK) show a composition bias toward polar residues. Residues 153-327 (SGKEEESRIH…GSFKDVKAEM (175 aa)) are compositionally biased toward basic and acidic residues. Positions 229-625 (RAKDRDRNNR…VHSINLSSRR (397 aa)) are DISC1-interaction domain. Phosphoserine occurs at positions 316 and 409. The segment covering 420–434 (SGKTVSSVIIDSQNS) has biased composition (polar residues). Positions 472-600 (GLVKKILETK…IRDQQDKICA (129 aa)) form a coiled coil.

This sequence belongs to the TRAF3IP1 family. In terms of assembly, interacts with IL13RA1. Binds to microtubules, TRAF3 and DISC1. Component of the IFT complex B, at least composed of IFT20, IFT22, IFT25, IFT27, IFT46, IFT52, TRAF3IP1/IFT54, IFT57, IFT74, IFT80, IFT81, and IFT88. Interacts with IFT88. Interacts with MAP4.

The protein resides in the cytoplasm. The protein localises to the cytoskeleton. Its subcellular location is the cell projection. It is found in the cilium. It localises to the cilium axoneme. The protein resides in the cilium basal body. In terms of biological role, plays an inhibitory role on IL13 signaling by binding to IL13RA1. Involved in suppression of IL13-induced STAT6 phosphorylation, transcriptional activity and DNA-binding. Recruits TRAF3 and DISC1 to the microtubules. Involved in epithelial morphogenesis and in the regulation of microtubule cytoskeleton organization. Is a negative regulator of microtubule stability, acting through the control of MAP4 levels. Involved in ciliogenesis. In Mus musculus (Mouse), this protein is TRAF3-interacting protein 1 (Traf3ip1).